A 190-amino-acid polypeptide reads, in one-letter code: Pancreatic IgW, short secretory form (190 aa).

The Ig-like C1-type domain occupies 53–145 (PNITALVPSV…PPSNFRSMIS (93 aa)). N-linked (GlcNAc...) asparagine glycosylation is present at Asn54. An intrachain disulfide couples Cys74 to Cys131. The N-linked (GlcNAc...) asparagine glycan is linked to Asn179.

As to expression, expressed in pancreas, spleen, epigonal organ and at low levels in several other tissues.

It is found in the secreted. In Ginglymostoma cirratum (Nurse shark), this protein is Pancreatic IgW, short secretory form.